The sequence spans 257 residues: UPF0246 protein YaaA (257 aa).

Belongs to the UPF0246 family.

The polypeptide is UPF0246 protein YaaA (Salmonella agona (strain SL483)).